We begin with the raw amino-acid sequence, 299 residues long: MTEHKSGFVSIIGRPNVGKSTFVNRVIGHKIAIMSDKAQTTRNKIQGVMTRDDAQIIFIDTPGIHKPKHKLGDYMMRVAKNTLSEIDAIMFMVNVNEDIGRGDEYIMEMLKNVKTPIFLVLNKIDLVHPDTLMPKIEQYQSYMDFTDIIPISALEGLNVDHFIDVLKSFLPEGPKYYPDNQISDHPEQFVVSEIIREKILHLTSEEIPHAIGVNVDRMIKEDEDRVRIEATIYVERDSQKGIVIGKGGKKLKEVGKRARRDIEMLLGSKVYLELWVKVQRDWRNKVNFIRQIGYVEDQD.

Positions 5–172 constitute an Era-type G domain; that stretch reads KSGFVSIIGR…IDVLKSFLPE (168 aa). The tract at residues 13 to 20 is G1; that stretch reads GRPNVGKS. 13–20 contributes to the GTP binding site; the sequence is GRPNVGKS. The interval 39-43 is G2; the sequence is QTTRN. Residues 60–63 are G3; it reads DTPG. GTP contacts are provided by residues 60-64 and 122-125; these read DTPGI and NKID. A G4 region spans residues 122 to 125; sequence NKID. Residues 151 to 153 form a G5 region; it reads ISA. Positions 203–280 constitute a KH type-2 domain; the sequence is TSEEIPHAIG…YLELWVKVQR (78 aa).

The protein belongs to the TRAFAC class TrmE-Era-EngA-EngB-Septin-like GTPase superfamily. Era GTPase family. Monomer.

The protein resides in the cytoplasm. It is found in the cell membrane. Its function is as follows. An essential GTPase that binds both GDP and GTP, with rapid nucleotide exchange. Plays a role in 16S rRNA processing and 30S ribosomal subunit biogenesis and possibly also in cell cycle regulation and energy metabolism. This Staphylococcus epidermidis (strain ATCC 12228 / FDA PCI 1200) protein is GTPase Era.